A 146-amino-acid polypeptide reads, in one-letter code: Large ribosomal subunit protein uL15 (146 aa).

The interval 1-51 is disordered; it reads MKLHELQPAPGSRKERNRVGRGIGSGNGKTSGKGHKGQNARSGGGVRIGFE. Gly residues-rich tracts occupy residues 21-31 and 42-51; these read RGIGSGNGKTS and SGGGVRIGFE.

The protein belongs to the universal ribosomal protein uL15 family. Part of the 50S ribosomal subunit.

Binds to the 23S rRNA. The sequence is that of Large ribosomal subunit protein uL15 from Anoxybacillus flavithermus (strain DSM 21510 / WK1).